A 253-amino-acid chain; its full sequence is Probable transcriptional regulatory protein Tlet_1011 (253 aa).

It belongs to the TACO1 family.

The protein resides in the cytoplasm. The polypeptide is Probable transcriptional regulatory protein Tlet_1011 (Pseudothermotoga lettingae (strain ATCC BAA-301 / DSM 14385 / NBRC 107922 / TMO) (Thermotoga lettingae)).